A 1066-amino-acid polypeptide reads, in one-letter code: FHIP family protein GH13096 (1066 aa).

Positions 1–15 (MSWLRTSPLRQSLTR) are enriched in polar residues. A disordered region spans residues 1 to 33 (MSWLRTSPLRQSLTRNSGGNGSGGSGNSGNASA). The segment covering 18-27 (GGNGSGGSGN) has biased composition (gly residues). Ser512 carries the phosphoserine modification. Disordered stretches follow at residues 647–688 (SFKW…NSSG), 827–885 (DNSP…RSDN), and 942–1010 (SRGV…FNSE). Over residues 658-687 (NDATTTTATSDPDVEHNNSSNHNNSSINSS) the composition is skewed to low complexity. A Phosphoserine modification is found at Ser829. The span at 836 to 856 (HQQQQLQHTTNSTHQQQQAQQ) shows a compositional bias: low complexity. Residues 950–963 (PRGNTCETSLSTTP) show a composition bias toward polar residues. A compositionally biased stretch (low complexity) spans 967 to 996 (AQATSASSTNSSIGGSTQTLSATHSSSTLH). Residues 1001–1010 (GPQTASFNSE) show a composition bias toward polar residues.

The protein belongs to the FHIP family.

In Drosophila grimshawi (Hawaiian fruit fly), this protein is FHIP family protein GH13096.